A 130-amino-acid chain; its full sequence is Small ribosomal subunit protein uS9 (130 aa).

This sequence belongs to the universal ribosomal protein uS9 family.

This is Small ribosomal subunit protein uS9 from Pseudomonas entomophila (strain L48).